Reading from the N-terminus, the 208-residue chain is Phosphoheptose isomerase (208 aa).

Residues 38 to 200 (MAVTLAKGHK…LFENVLALQP (163 aa)) form the SIS domain. 53-55 (NGG) provides a ligand contact to substrate. Zn(2+)-binding residues include H62 and E66. Substrate-binding positions include E66, 95 to 96 (ND), 121 to 123 (STS), S126, and Q173. Zn(2+)-binding residues include Q173 and H181.

The protein belongs to the SIS family. GmhA subfamily. Homotetramer. Zn(2+) serves as cofactor.

It localises to the cytoplasm. The catalysed reaction is 2 D-sedoheptulose 7-phosphate = D-glycero-alpha-D-manno-heptose 7-phosphate + D-glycero-beta-D-manno-heptose 7-phosphate. Its pathway is carbohydrate biosynthesis; D-glycero-D-manno-heptose 7-phosphate biosynthesis; D-glycero-alpha-D-manno-heptose 7-phosphate and D-glycero-beta-D-manno-heptose 7-phosphate from sedoheptulose 7-phosphate: step 1/1. Catalyzes the isomerization of sedoheptulose 7-phosphate in D-glycero-D-manno-heptose 7-phosphate. This chain is Phosphoheptose isomerase, found in Nitratidesulfovibrio vulgaris (strain ATCC 29579 / DSM 644 / CCUG 34227 / NCIMB 8303 / VKM B-1760 / Hildenborough) (Desulfovibrio vulgaris).